A 134-amino-acid chain; its full sequence is Small ribosomal subunit protein uS11 (134 aa).

A disordered region spans residues 115-134; it reads TPIPHNGTRPPKKVLKRDLK. Residues 124 to 134 are compositionally biased toward basic residues; sequence PPKKVLKRDLK.

The protein belongs to the universal ribosomal protein uS11 family. Part of the 30S ribosomal subunit. Interacts with proteins S7 and S18. Binds to IF-3.

Functionally, located on the platform of the 30S subunit, it bridges several disparate RNA helices of the 16S rRNA. Forms part of the Shine-Dalgarno cleft in the 70S ribosome. In Mycoplasma mobile (strain ATCC 43663 / 163K / NCTC 11711) (Mesomycoplasma mobile), this protein is Small ribosomal subunit protein uS11.